Reading from the N-terminus, the 120-residue chain is Large ribosomal subunit protein eL34x (120 aa).

The disordered stretch occupies residues 31–50 (TYQTTNKRASGPKCPVTGKR).

The protein belongs to the eukaryotic ribosomal protein eL34 family.

The sequence is that of Large ribosomal subunit protein eL34x (RPL34C) from Arabidopsis thaliana (Mouse-ear cress).